The primary structure comprises 219 residues: Probable GTP-binding protein EngB (219 aa).

The 185-residue stretch at Gly33–His217 folds into the EngB-type G domain. GTP contacts are provided by residues Gly41–Ser48, Gly68–Glu72, Asp95–Gly98, Thr162–Asp165, and Thr196–Ser198. The Mg(2+) site is built by Ser48 and Thr70.

Belongs to the TRAFAC class TrmE-Era-EngA-EngB-Septin-like GTPase superfamily. EngB GTPase family. The cofactor is Mg(2+).

Its function is as follows. Necessary for normal cell division and for the maintenance of normal septation. The chain is Probable GTP-binding protein EngB from Allorhizobium ampelinum (strain ATCC BAA-846 / DSM 112012 / S4) (Agrobacterium vitis (strain S4)).